Here is an 81-residue protein sequence, read N- to C-terminus: Exodeoxyribonuclease 7 small subunit (81 aa).

Belongs to the XseB family. In terms of assembly, heterooligomer composed of large and small subunits.

The protein localises to the cytoplasm. It carries out the reaction Exonucleolytic cleavage in either 5'- to 3'- or 3'- to 5'-direction to yield nucleoside 5'-phosphates.. In terms of biological role, bidirectionally degrades single-stranded DNA into large acid-insoluble oligonucleotides, which are then degraded further into small acid-soluble oligonucleotides. The chain is Exodeoxyribonuclease 7 small subunit from Ruegeria sp. (strain TM1040) (Silicibacter sp.).